We begin with the raw amino-acid sequence, 447 residues long: Alpha-1,3-mannosyl-glycoprotein 2-beta-N-acetylglucosaminyltransferase (447 aa).

Over 1 to 6 (MLKKQT) the chain is Cytoplasmic. Residues 7–29 (AGLVLWGAIIFVGWNALLLLFFW) traverse the membrane as a helical; Signal-anchor for type II membrane protein segment. The Lumenal portion of the chain corresponds to 30–447 (TRPAPGRLPS…TWTGYDPSWN (418 aa)). A disulfide bond links cysteine 115 and cysteine 145. Residues arginine 117, aspartate 144, histidine 190, and aspartate 212 each contribute to the substrate site. Position 213 (aspartate 213) interacts with Mn(2+). A disulfide bond links cysteine 239 and cysteine 305. Aspartate 291 acts as the Proton acceptor in catalysis. Serine 322 is a substrate binding site.

Belongs to the glycosyltransferase 13 family. Interacts with MGAT4D. Interacts with BRI3. Requires Mn(2+) as cofactor. Detected in kidney, liver and brain.

The protein resides in the golgi apparatus membrane. It localises to the cytoplasm. It is found in the perinuclear region. The enzyme catalyses N(4)-(alpha-D-Man-(1-&gt;3)-[alpha-D-Man-(1-&gt;3)-[alpha-D-Man-(1-&gt;6)]-alpha-D-Man-(1-&gt;6)]-beta-D-Man-(1-&gt;4)-beta-D-GlcNAc-(1-&gt;4)-beta-D-GlcNAc)-L-asparaginyl-[protein] (N-glucan mannose isomer 5A1,2) + UDP-N-acetyl-alpha-D-glucosamine = N(4)-{beta-D-GlcNAc-(1-&gt;2)-alpha-D-Man-(1-&gt;3)-[alpha-D-Man-(1-&gt;3)-[alpha-D-Man-(1-&gt;6)]-alpha-D-Man-(1-&gt;6)]-beta-D-Man-(1-&gt;4)-beta-D-GlcNAc-(1-&gt;4)-beta-D-GlcNAc}-L-asparaginyl-[protein] + UDP + H(+). The protein operates within protein modification; protein glycosylation. Its function is as follows. Initiates complex N-linked carbohydrate formation. Essential for the conversion of high-mannose to hybrid and complex N-glycans. In Mus musculus (Mouse), this protein is Alpha-1,3-mannosyl-glycoprotein 2-beta-N-acetylglucosaminyltransferase (Mgat1).